The following is a 304-amino-acid chain: MRLPIFLDTDPGIDDAVAIAAAIFAPELDLQLMTTVAGNVSVEKTTRNALQLLHFWNAEIPLAQGASVPLVRAPRNAASVHGESGMAGYDFVEHNRKPLEQPAFLAIRDALMRAPEPVTLVAIGPLTNIALLLSQCPECKPHIRRLVIMGGSAGRGNCTPNAEFNIAADPEAAACVFRSGIEIVMCGLDVTNQAILTPDYLGTLPELNRTGKMLHALFSHYRSGSMQSGLRMHDLCAIAWLVRPDLFTLKPCFVAVETQGEFTSGTTVVDIDGCLGKPANVQVALELDVKGFQQWVAEVLAKAS.

His233 is an active-site residue.

Belongs to the IUNH family. RihC subfamily.

Functionally, hydrolyzes both purine and pyrimidine ribonucleosides with a broad-substrate specificity. In Escherichia fergusonii (strain ATCC 35469 / DSM 13698 / CCUG 18766 / IAM 14443 / JCM 21226 / LMG 7866 / NBRC 102419 / NCTC 12128 / CDC 0568-73), this protein is Non-specific ribonucleoside hydrolase RihC.